A 398-amino-acid chain; its full sequence is Cytohesin-1 (398 aa).

Met1 carries the post-translational modification N-acetylmethionine. The stretch at 10–67 (SDLTAEERQELENIRRRKQELLADIQRLKDEIAEVANEIENLGSTEERKNMQRNKQVA) forms a coiled coil. Residues 73–202 (FNMDPKKGIQ…IIMLNTSLHN (130 aa)) form the SEC7 domain. Residues 260 to 377 (NPDREGWLLK…WIKCIKAAIS (118 aa)) enclose the PH domain. A 1,2-diacyl-sn-glycero-3-phospho-(1D-myo-inositol-3,4,5-trisphosphate) contacts are provided by residues 269-277 (KLGGGRVKT), Arg281, Tyr292, Arg302, and Asn351. Positions 388-396 (RKKKVSSTK) are C-terminal autoinhibitory region.

As to quaternary structure, interacts with TRIM23 and CYTIP. Interacts (via coiled-coil domain) with FRMD4A (via coiled-coil domain). Interacts with FRMD4B. Found in a complex with PARD3, CYTH1 and FRMD4A. Interacts (via N-terminal domain) with INAVA (via N-terminal domain). Ubiquitinated by SCF(FBXW11) E3 ubiquitin-protein ligase complex. Ubiquitination induces proteasomal degradation.

The protein resides in the cell membrane. It is found in the cytoplasm. It localises to the cytosol. The protein localises to the cell junction. Its subcellular location is the tight junction. The protein resides in the adherens junction. In terms of biological role, promotes guanine-nucleotide exchange on ARF1, ARF5 and ARF6. Promotes the activation of ARF factors through replacement of GDP with GTP. Plays an important role in membrane trafficking, during junctional remodeling and epithelial polarization, through regulation of ARF6 activity. This chain is Cytohesin-1 (CYTH1), found in Chlorocebus aethiops (Green monkey).